Here is a 338-residue protein sequence, read N- to C-terminus: Holliday junction branch migration complex subunit RuvB (338 aa).

The tract at residues 1 to 22 (MIEADRLIHAEPQGPEERDEQI) is disordered. A large ATPase domain (RuvB-L) region spans residues 4 to 187 (ADRLIHAEPQ…FGIPLRLEFY (184 aa)). Residues R27, G68, K71, T72, T73, 134–136 (EDY), R177, Y187, and R224 each bind ATP. Residue T72 participates in Mg(2+) binding. A small ATPAse domain (RuvB-S) region spans residues 188 to 258 (NTKDLSSIVS…VADLALDMLD (71 aa)). Residues 261-338 (SEGFDYMDRK…RHFDIIQPEK (78 aa)) form a head domain (RuvB-H) region. DNA is bound by residues R297, R316, and R321.

Belongs to the RuvB family. Homohexamer. Forms an RuvA(8)-RuvB(12)-Holliday junction (HJ) complex. HJ DNA is sandwiched between 2 RuvA tetramers; dsDNA enters through RuvA and exits via RuvB. An RuvB hexamer assembles on each DNA strand where it exits the tetramer. Each RuvB hexamer is contacted by two RuvA subunits (via domain III) on 2 adjacent RuvB subunits; this complex drives branch migration. In the full resolvosome a probable DNA-RuvA(4)-RuvB(12)-RuvC(2) complex forms which resolves the HJ.

The protein resides in the cytoplasm. The catalysed reaction is ATP + H2O = ADP + phosphate + H(+). Functionally, the RuvA-RuvB-RuvC complex processes Holliday junction (HJ) DNA during genetic recombination and DNA repair, while the RuvA-RuvB complex plays an important role in the rescue of blocked DNA replication forks via replication fork reversal (RFR). RuvA specifically binds to HJ cruciform DNA, conferring on it an open structure. The RuvB hexamer acts as an ATP-dependent pump, pulling dsDNA into and through the RuvAB complex. RuvB forms 2 homohexamers on either side of HJ DNA bound by 1 or 2 RuvA tetramers; 4 subunits per hexamer contact DNA at a time. Coordinated motions by a converter formed by DNA-disengaged RuvB subunits stimulates ATP hydrolysis and nucleotide exchange. Immobilization of the converter enables RuvB to convert the ATP-contained energy into a lever motion, pulling 2 nucleotides of DNA out of the RuvA tetramer per ATP hydrolyzed, thus driving DNA branch migration. The RuvB motors rotate together with the DNA substrate, which together with the progressing nucleotide cycle form the mechanistic basis for DNA recombination by continuous HJ branch migration. Branch migration allows RuvC to scan DNA until it finds its consensus sequence, where it cleaves and resolves cruciform DNA. This Shewanella sediminis (strain HAW-EB3) protein is Holliday junction branch migration complex subunit RuvB.